A 36-amino-acid polypeptide reads, in one-letter code: Mating hormone A-factor 1 (36 aa).

Residues 1-21 (MQPSTATAAPKEKTSSEKKDN) constitute a propeptide that is removed on maturation. Residue C33 is modified to Cysteine methyl ester. A lipid anchor (S-farnesyl cysteine) is attached at C33. The propeptide at 34–36 (VIA) is removed in mature form.

It localises to the cell membrane. The active factor is excreted into the culture medium by haploid cells of the A mating type and acts on cells of the opposite mating type (type alpha). It mediates the conjugation process between the two types by inhibiting the initiation of DNA synthesis in type alpha cells and synchronizing them with type A. This chain is Mating hormone A-factor 1 (MFA1), found in Saccharomyces cerevisiae (strain ATCC 204508 / S288c) (Baker's yeast).